The sequence spans 85 residues: Large ribosomal subunit protein bL27 (85 aa).

Residues Met-1–Gly-22 form a disordered region.

The protein belongs to the bacterial ribosomal protein bL27 family.

The polypeptide is Large ribosomal subunit protein bL27 (Sorangium cellulosum (strain So ce56) (Polyangium cellulosum (strain So ce56))).